Consider the following 462-residue polypeptide: NEDD8-activating enzyme E1 regulatory subunit (462 aa).

Belongs to the ubiquitin-activating E1 family. ULA1 subfamily. In terms of assembly, heterodimer of UBA3 and ULA1. The complex binds NEDD8 and UBC12.

The protein operates within protein modification; protein neddylation. Its function is as follows. Regulatory subunit of the dimeric UBA3-ULA1 E1 enzyme. E1 activates NEDD8/RUB1 by first adenylating its C-terminal glycine residue with ATP, thereafter linking this residue to the side chain of the catalytic cysteine, yielding a NEDD8-UBA3 thioester and free AMP. E1 finally transfers NEDD8 to the catalytic cysteine of UBC12. The chain is NEDD8-activating enzyme E1 regulatory subunit (ULA1) from Saccharomyces cerevisiae (strain ATCC 204508 / S288c) (Baker's yeast).